Reading from the N-terminus, the 333-residue chain is MWAALPLLCAGAWLLSTGATAELTVNAIEKFHFKSWMKQHQKTYSSVEYNHRLQMFANNWRKIQAHNQRNHTFKMALNQFSDMSFAEIKHKFLWSEPQNCSATKSNYLRGTGPYPSSMDWRKKGNVVSPVKNQGACGSCWTFSTTGALESAVAIASGKMLSLAEQQLVDCAQAFNNHGCKGGLPSQAFEYILYNKGIMEEDSYPYIGKDSSCRFNPQKAVAFVKNVVNITLNDEAAMVEAVALYNPVSFAFEVTEDFLMYKSGVYSSKSCHKTPDKVNHAVLAVGYGEQNGLLYWIVKNSWGSQWGENGYFLIERGKNMCGLAACASYPIPQV.

Positions 1-20 (MWAALPLLCAGAWLLSTGAT) are cleaved as a signal peptide. Residues 21–95 (AELTVNAIEK…AEIKHKFLWS (75 aa)) constitute a propeptide, activation peptide. 2 N-linked (GlcNAc...) asparagine glycosylation sites follow: Asn70 and Asn99. 4 cysteine pairs are disulfide-bonded: Cys100–Cys325, Cys136–Cys179, Cys170–Cys212, and Cys270–Cys320. Positions 104 to 113 (KSNYLRGTGP) are excised as a propeptide. Cys139 is an active-site residue. Asn228 carries an N-linked (GlcNAc...) asparagine glycan. Active-site residues include His279 and Asn299.

Belongs to the peptidase C1 family. In terms of assembly, composed of a mini chain and a large chain. The large chain may be split into heavy and light chain. All chains are held together by disulfide bonds. In terms of tissue distribution, widely expressed with highest expression found in non-skeletal tissues. Low levels found in skeletal tissue.

The protein localises to the lysosome. It carries out the reaction Hydrolysis of proteins, acting as an aminopeptidase (notably, cleaving Arg-|-Xaa bonds) as well as an endopeptidase.. In terms of biological role, important for the overall degradation of proteins in lysosomes. This Mus musculus (Mouse) protein is Pro-cathepsin H (Ctsh).